Consider the following 65-residue polypeptide: Large ribosomal subunit protein bL35 (65 aa).

This sequence belongs to the bacterial ribosomal protein bL35 family.

The chain is Large ribosomal subunit protein bL35 from Karelsulcia muelleri (strain GWSS) (Sulcia muelleri).